We begin with the raw amino-acid sequence, 468 residues long: UDP-N-acetylmuramate--L-alanine ligase (468 aa).

ATP is bound at residue 121 to 127 (GSHGKTT).

It belongs to the MurCDEF family.

The protein localises to the cytoplasm. It carries out the reaction UDP-N-acetyl-alpha-D-muramate + L-alanine + ATP = UDP-N-acetyl-alpha-D-muramoyl-L-alanine + ADP + phosphate + H(+). It participates in cell wall biogenesis; peptidoglycan biosynthesis. Its function is as follows. Cell wall formation. This Borreliella burgdorferi (strain ATCC 35210 / DSM 4680 / CIP 102532 / B31) (Borrelia burgdorferi) protein is UDP-N-acetylmuramate--L-alanine ligase.